The following is a 319-amino-acid chain: MSISSPSAASGHLVSVSAPAKINLHLEVLGLRSDGFHELAMVMQSIELADQLHFRNTADGTISLRCDDSSLSTAGDNLIVQAAHLLRERSGFSELGAAIELQKRIPIGAGLAGGSSDGAATLVGLNGLWNLNFSQGQLEGFAAELGSDMPFCLAGGSQLCFGRGERLESLQAMQASMAVVLVKDPSVSVSTPWAYGRCKELFRSRYLSQESDFEQRRQQLRESSWLNPLRADDPPPLHNDLQAVVAPEVFAVQTTLKLLSDLPGSLAVAMSGSGPSCFALFADVDSAQAALKRQQPAFDAAGLSSWCCAFRSEGIKLEA.

Lys21 is an active-site residue. 106 to 116 (PIGAGLAGGSS) is a binding site for ATP. Residue Asp148 is part of the active site.

Belongs to the GHMP kinase family. IspE subfamily.

The catalysed reaction is 4-CDP-2-C-methyl-D-erythritol + ATP = 4-CDP-2-C-methyl-D-erythritol 2-phosphate + ADP + H(+). Its pathway is isoprenoid biosynthesis; isopentenyl diphosphate biosynthesis via DXP pathway; isopentenyl diphosphate from 1-deoxy-D-xylulose 5-phosphate: step 3/6. Its function is as follows. Catalyzes the phosphorylation of the position 2 hydroxy group of 4-diphosphocytidyl-2C-methyl-D-erythritol. This Prochlorococcus marinus (strain MIT 9303) protein is 4-diphosphocytidyl-2-C-methyl-D-erythritol kinase.